The chain runs to 396 residues: MDENENSQSPAPSHQYPKETLRKRQNSVQNSGGSESSRLSRKSFKLDYRLEEDVTKSKKGKDGRFVNPWPTWKNVSIPNVLRWLIMEKDHSSVPGSKEELDKELPVLKPYFISDPEEAGVREAGLRVTWLGHATLMVEMDELILLTDPMFSSRASPSQYMGPKRFRRPPCTISELPPIDAVLISHNHYDHLDYGSVLALNERFGSELRWFVPLGLLDWMQKCGCENVIELDWWEENCVPGHDKVTFVFTPSQHWCKRTLLDDNKVLWGSWSVLGPWNRFFFAGDTGYCPAFEEIGKRFGPFDLAAIPIGAYEPRWFMKYQHADPEDAVRIHIDVQAKRSVAIHWGTFALANEHYLEPPVKLNEALERYGLKSEDFFILKHGESRYLNTDDKAFEET.

Methionine 1 carries the post-translational modification N-acetylmethionine. Composition is skewed to polar residues over residues 1–12 (MDENENSQSPAP) and 26–37 (NSVQNSGGSESS). Positions 1–41 (MDENENSQSPAPSHQYPKETLRKRQNSVQNSGGSESSRLSR) are disordered. Zn(2+) is bound by residues histidine 185 and histidine 187. Residue tyrosine 188 coordinates an N-acyl-1,2-diacyl-sn-glycero-3-phosphoethanolamine. Zn(2+) contacts are provided by aspartate 189, histidine 190, and histidine 253. Position 256 (lysine 256) interacts with deoxycholate. A Zn(2+)-binding site is contributed by aspartate 284. Histidine 321 contributes to the an N-acyl-1,2-diacyl-sn-glycero-3-phosphoethanolamine binding site. Histidine 343 lines the Zn(2+) pocket. Alanine 348 lines the deoxycholate pocket.

This sequence belongs to the NAPE-PLD family. As to quaternary structure, homodimer. Bile acids promote the assembly of inactive monomers into an active dimer and enable catalysis. It depends on Zn(2+) as a cofactor. In terms of tissue distribution, widely expressed. Highest expression in brain, kidney and testis (at protein level). Expressed in adipose tissue (at protein level).

It is found in the golgi apparatus membrane. The protein resides in the early endosome membrane. Its subcellular location is the nucleus envelope. The protein localises to the nucleus. It localises to the nucleoplasm. The enzyme catalyses an N-acyl-1,2-diacyl-sn-glycero-3-phosphoethanolamine + H2O = an N-acylethanolamine + a 1,2-diacyl-sn-glycero-3-phosphate + H(+). The catalysed reaction is N-butanoyl-1-hexadecanoyl-2-(9Z,12Z-octadecadienoyl)-sn-glycero-3-phosphoethanolamine + H2O = N-butanoyl ethanolamine + 1-hexadecanoyl-2-(9Z,12Z-octadecadienoyl)-sn-glycero-3-phosphate + H(+). It catalyses the reaction N-hexanoyl-1-hexadecanoyl-2-(9Z,12Z-octadecadienoyl)-sn-glycero-3-phosphoethanolamine + H2O = N-hexanoyl ethanolamine + 1-hexadecanoyl-2-(9Z,12Z-octadecadienoyl)-sn-glycero-3-phosphate + H(+). It carries out the reaction N-octanoyl-1-hexadecanoyl-2-(9Z,12Z-octadecadienoyl)-sn-glycero-3-phosphoethanolamine + H2O = N-octanoyl ethanolamine + 1-hexadecanoyl-2-(9Z,12Z-octadecadienoyl)-sn-glycero-3-phosphate + H(+). The enzyme catalyses N-decanoyl-1-hexadecanoyl-2-(9Z,12Z-octadecadienoyl)-sn-glycero-3-phosphoethanolamine + H2O = N-decanoyl ethanolamine + 1-hexadecanoyl-2-(9Z,12Z-octadecadienoyl)-sn-glycero-3-phosphate + H(+). The catalysed reaction is N-dodecanoyl-1,2-di-(9Z-octadecenoyl)-sn-glycero-3-phosphoethanolamine + H2O = N-dodecanoylethanolamine + 1,2-di-(9Z-octadecenoyl)-sn-glycero-3-phosphate + H(+). It catalyses the reaction N-tetradecanoyl-1,2-di-(9Z-octadecenoyl)-sn-glycero-3-phosphoethanolamine + H2O = N-tetradecanoylethanolamine + 1,2-di-(9Z-octadecenoyl)-sn-glycero-3-phosphate + H(+). It carries out the reaction N-hexadecanoyl-1,2-di-(9Z-octadecenoyl)-sn-glycero-3-phosphoethanolamine + H2O = N-hexadecanoylethanolamine + 1,2-di-(9Z-octadecenoyl)-sn-glycero-3-phosphate + H(+). The enzyme catalyses N,1-dihexadecanoyl-2-(9Z,12Z-octadecadienoyl)-sn-glycero-3-phosphoethanolamine + H2O = 1-hexadecanoyl-2-(9Z,12Z-octadecadienoyl)-sn-glycero-3-phosphate + N-hexadecanoylethanolamine + H(+). The catalysed reaction is N-octadecanoyl-1,2-di-(9Z-octadecenoyl)-sn-glycero-3-phosphoethanolamine + H2O = N-octadecanoyl ethanolamine + 1,2-di-(9Z-octadecenoyl)-sn-glycero-3-phosphate + H(+). It catalyses the reaction N,1,2-tri-(9Z-octadecenoyl)-sn-glycero-3-phosphoethanolamine + H2O = N-(9Z-octadecenoyl) ethanolamine + 1,2-di-(9Z-octadecenoyl)-sn-glycero-3-phosphate + H(+). It carries out the reaction N-(5Z,8Z,11Z,14Z-eicosatetraenoyl)-1,2-diacyl-sn-glycero-3-phosphoethanolamine + H2O = N-(5Z,8Z,11Z,14Z-eicosatetraenoyl)-ethanolamine + a 1,2-diacyl-sn-glycero-3-phosphate + H(+). The enzyme catalyses N-(5Z,8Z,11Z,14Z-eicosatetraenoyl)-1,2-di-(9Z-octadecenoyl)-sn-glycero-3-phosphoethanolamine + H2O = N-(5Z,8Z,11Z,14Z-eicosatetraenoyl)-ethanolamine + 1,2-di-(9Z-octadecenoyl)-sn-glycero-3-phosphate + H(+). The catalysed reaction is 1-O-(1Z-octadecenoyl)-2-(9Z-octadecenoyl)-sn-glycero-3-phospho-N-hexadecanoyl-ethanolamine + H2O = 1-O-(1Z-octadecenoyl)-2-(9Z-octadecenoyl)-sn-glycero-3-phosphate + N-hexadecanoylethanolamine + H(+). It catalyses the reaction N,1-diacyl-sn-glycero-3-phosphoethanolamine + H2O = an N-acylethanolamine + a 1-acyl-sn-glycero-3-phosphate + H(+). It carries out the reaction N,1-dihexadecanoyl-sn-glycero-3-phosphoethanolamine + H2O = N-hexadecanoylethanolamine + 1-hexadecanoyl-sn-glycero-3-phosphate + H(+). The enzyme catalyses N-(5Z,8Z,11Z,14Z-eicosatetraenoyl)-1-(9Z-octadecenoyl)-sn-glycero-3-phosphoethanolamine + H2O = N-(5Z,8Z,11Z,14Z-eicosatetraenoyl)-ethanolamine + 1-(9Z-octadecenoyl)-sn-glycero-3-phosphate + H(+). With respect to regulation, activated by divalent cations. Activated by bile acids. Activated by membrane phospholipids such as phosphatidylethanolamines. Inhibited by cardiolipins. In terms of biological role, D-type phospholipase that hydrolyzes N-acyl-phosphatidylethanolamines (NAPEs) to produce bioactive N-acylethanolamines/fatty acid ethanolamides (NAEs/FAEs) and phosphatidic acid. Cleaves the terminal phosphodiester bond of diacyl- and alkenylacyl-NAPEs, primarily playing a role in the generation of long-chain saturated and monounsaturated NAEs in the brain. May control NAPE homeostasis in dopaminergic neuron membranes and regulate neuron survival, partly through RAC1 activation. As a regulator of lipid metabolism in the adipose tissue, mediates the crosstalk between adipocytes, gut microbiota and immune cells to control body temperature and weight. In particular, regulates energy homeostasis by promoting cold-induced brown or beige adipocyte differentiation program to generate heat from fatty acids and glucose. Has limited D-type phospholipase activity toward N-acyl lyso-NAPEs. The polypeptide is N-acyl-phosphatidylethanolamine-hydrolyzing phospholipase D (Napepld) (Rattus norvegicus (Rat)).